A 311-amino-acid polypeptide reads, in one-letter code: HPr kinase/phosphorylase (311 aa).

Active-site residues include His-138 and Lys-159. Gly-153–Ser-160 is a binding site for ATP. Ser-160 is a Mg(2+) binding site. Catalysis depends on Asp-177, which acts as the Proton acceptor; for phosphorylation activity. Proton donor; for dephosphorylation activity. Positions Leu-201–Asp-210 are important for the catalytic mechanism of both phosphorylation and dephosphorylation. Position 202 (Glu-202) interacts with Mg(2+). Arg-243 is an active-site residue. An important for the catalytic mechanism of dephosphorylation region spans residues Pro-264 to Arg-269.

It belongs to the HPrK/P family. Homohexamer. Mg(2+) is required as a cofactor.

It catalyses the reaction [HPr protein]-L-serine + ATP = [HPr protein]-O-phospho-L-serine + ADP + H(+). The enzyme catalyses [HPr protein]-O-phospho-L-serine + phosphate + H(+) = [HPr protein]-L-serine + diphosphate. Functionally, catalyzes the ATP- as well as the pyrophosphate-dependent phosphorylation of a specific serine residue in HPr, a phosphocarrier protein of the phosphoenolpyruvate-dependent sugar phosphotransferase system (PTS). HprK/P also catalyzes the pyrophosphate-producing, inorganic phosphate-dependent dephosphorylation (phosphorolysis) of seryl-phosphorylated HPr (P-Ser-HPr). The two antagonistic activities of HprK/P are regulated by several intracellular metabolites, which change their concentration in response to the absence or presence of rapidly metabolisable carbon sources (glucose, fructose, etc.) in the growth medium. Therefore, by controlling the phosphorylation state of HPr, HPrK/P is a sensor enzyme that plays a major role in the regulation of carbon metabolism and sugar transport: it mediates carbon catabolite repression (CCR), and regulates PTS-catalyzed carbohydrate uptake and inducer exclusion. This Streptococcus agalactiae serotype Ia (strain ATCC 27591 / A909 / CDC SS700) protein is HPr kinase/phosphorylase.